The chain runs to 102 residues: Small ribosomal subunit protein uS10 (102 aa).

Belongs to the universal ribosomal protein uS10 family. Part of the 30S ribosomal subunit.

Involved in the binding of tRNA to the ribosomes. This Malacoplasma penetrans (strain HF-2) (Mycoplasma penetrans) protein is Small ribosomal subunit protein uS10.